The primary structure comprises 190 residues: dTTP/UTP pyrophosphatase (190 aa).

The active-site Proton acceptor is the Asp67.

It belongs to the Maf family. YhdE subfamily. A divalent metal cation serves as cofactor.

The protein localises to the cytoplasm. The enzyme catalyses dTTP + H2O = dTMP + diphosphate + H(+). It catalyses the reaction UTP + H2O = UMP + diphosphate + H(+). In terms of biological role, nucleoside triphosphate pyrophosphatase that hydrolyzes dTTP and UTP. May have a dual role in cell division arrest and in preventing the incorporation of modified nucleotides into cellular nucleic acids. In Aquifex aeolicus (strain VF5), this protein is dTTP/UTP pyrophosphatase.